The primary structure comprises 531 residues: SWI/SNF-related matrix-associated actin-dependent regulator of chromatin subfamily D member 2 (531 aa).

The interval Ala-20–Ala-85 is disordered. Residues Pro-34–Pro-45 show a composition bias toward low complexity. 2 positions are modified to asymmetric dimethylarginine: Arg-81 and Arg-104. Positions Phe-202 to Lys-226 are disordered. Position 203 is a phosphoserine (Ser-203). Thr-217 is subject to Phosphothreonine. Lys-226 participates in a covalent cross-link: Glycyl lysine isopeptide (Lys-Gly) (interchain with G-Cter in SUMO2). Residues His-306 to His-383 enclose the SWIB/MDM2 domain.

This sequence belongs to the SMARCD family. As to quaternary structure, component of the multiprotein chromatin-remodeling complexes SWI/SNF: SWI/SNF-A (BAF), SWI/SNF-B (PBAF) and related complexes. The canonical complex contains a catalytic subunit (either SMARCA4/BRG1/BAF190A or SMARCA2/BRM/BAF190B), and at least SMARCE1, ACTL6A/BAF53, SMARCC1/BAF155, SMARCC2/BAF170, and SMARCB1/SNF5/BAF47. Other subunits specific to each of the complexes may also be present permitting several possible combinations developmentally and tissue specific. Component of the BAF complex, which includes at least actin (ACTB), ARID1A/BAF250A, ARID1B/BAF250B, SMARCA2/BRM, SMARCA4/BRG1, ACTL6A/BAF53, ACTL6B/BAF53B, SMARCE1/BAF57, SMARCC1/BAF155, SMARCC2/BAF170, SMARCB1/SNF5/INI1, and one or more SMARCD1/BAF60A, SMARCD2/BAF60B, or SMARCD3/BAF60C. In muscle cells, the BAF complex also contains DPF3. Component of the SWI/SNF-B (PBAF) chromatin remodeling complex, at least composed of SMARCA4/BRG1, SMARCB1/BAF47/SNF5, ACTL6A/BAF53A or ACTL6B/BAF53B, SMARCE1/BAF57, SMARCD1/BAF60A, SMARCD2/BAF60B, perhaps SMARCD3/BAF60C, SMARCC1/BAF155, SMARCC2/BAF170, PBRM1/BAF180, ARID2/BAF200 and actin (ACTB). Interacts with UNKL. Interacts with CEBPE. In terms of processing, ubiquitinated through a signaling process involving RAC1 and the RING finger protein UNKL.

It is found in the nucleus. Functionally, involved in transcriptional activation and repression of select genes by chromatin remodeling (alteration of DNA-nucleosome topology). Component of SWI/SNF chromatin remodeling complexes that carry out key enzymatic activities, changing chromatin structure by altering DNA-histone contacts within a nucleosome in an ATP-dependent manner. Critical regulator of myeloid differentiation, controlling granulocytopoiesis and the expression of genes involved in neutrophil granule formation. This is SWI/SNF-related matrix-associated actin-dependent regulator of chromatin subfamily D member 2 (Smarcd2) from Rattus norvegicus (Rat).